The following is an 89-amino-acid chain: LSM complex subunit LSM3 (89 aa).

The Sm domain occupies 3–82 (TPLDLLKLNL…VTLISTPSED (80 aa)).

Belongs to the snRNP Sm proteins family. As to quaternary structure, component of the heptameric LSM1-LSM7 complex that forms a seven-membered ring structure with a donut shape. The LSm subunits are arranged in the order LSM1, LSM2, LSM3, LSM6, LSM5, LSM7 and LSM4. Except for LSM1, where a C-terminal helix crosses the ring structure to form additional interactions with LSM3 and LSM6, each subunit interacts only with its two neighboring subunits. The LSM1-LSM7 complex interacts with PAT1; within the complex PAT1 has direct interactions with LSM2 and LSM3. The LSM1-LSM7 complex interacts with XRN1. Component of the heptameric LSM2-LSM8 complex that forms a seven-membered ring structure with a donut shape; an RNA strand can pass through the hole in the center of the ring structure. The LSm subunits are arranged in the order LSM8, LSM2, LSM3, LSM6, LSM5, LSM7 and LSM4. Component of the spliceosome U4/U6-U5 tri-snRNP complex composed of the U4, U6 and U5 snRNAs and at least PRP3, PRP4, PRP6, PRP8, PRP18, PRP31, PRP38, SNU13, SNU23, SNU66, SNU114, SPP381, SMB1, SMD1, SMD2, SMD3, SMX2, SMX3, LSM2, LSM3, LSM4, LSM5, LSM6, LSM7, LSM8, BRR2 and DIB1. May be found in a complex comprising LSM2-LSM7 without LSM1 or LSM8; the complex associates with pre-P RNA and snoRNA SNR5.

Its subcellular location is the nucleus. It localises to the nucleolus. The protein resides in the cytoplasm. Its function is as follows. Component of LSm protein complexes, which are involved in RNA processing and may function in a chaperone-like manner. Component of the cytoplasmic LSM1-LSM7 complex which is involved in mRNA degradation by activating the decapping step. Together with PAT1, the LSM1-LSM7 complex binds to osmotic stress-activated mRNAs to attenuate the osmotic stress response, probably by limiting ribosome access to the mRNA and consequently translation. Component of the nuclear LSM2-LSM8 complex, which is involved in spliceosome assembly. The LSM2-LSM8 complex plays a role in the biogenesis of the spliceosomal U4/U6-U5 tri-snRNP complex by accelerating PRP24-mediated annealing of U4/U6 di-snRNA. The LSM2-LSM8 complex binds U6 snRNA terminating with a non-cyclic 3' phosphate group. LSM2-LSM8 is probably also involved in degradation of nuclear pre-mRNA by targeting them for decapping. LSM2-LSM8 could be involved in processing of pre-tRNAs, pre-rRNAs and U3 snoRNA, although involvement may be indirect. In a complex that probably contains LSM2-LSM7, but not LSM1 or LSM8, associates with the precursor of the RNA component of RNase P (pre-P RNA) and may be involved in maturing pre-P RNA; the complex also associates with snoRNA SNR5. In Saccharomyces cerevisiae (strain ATCC 204508 / S288c) (Baker's yeast), this protein is LSM complex subunit LSM3 (LSM3).